We begin with the raw amino-acid sequence, 303 residues long: ATP phosphoribosyltransferase (303 aa).

The protein belongs to the ATP phosphoribosyltransferase family. Long subfamily. It depends on Mg(2+) as a cofactor.

The protein resides in the cytoplasm. The catalysed reaction is 1-(5-phospho-beta-D-ribosyl)-ATP + diphosphate = 5-phospho-alpha-D-ribose 1-diphosphate + ATP. It functions in the pathway amino-acid biosynthesis; L-histidine biosynthesis; L-histidine from 5-phospho-alpha-D-ribose 1-diphosphate: step 1/9. Its activity is regulated as follows. Feedback inhibited by histidine. Its function is as follows. Catalyzes the condensation of ATP and 5-phosphoribose 1-diphosphate to form N'-(5'-phosphoribosyl)-ATP (PR-ATP). Has a crucial role in the pathway because the rate of histidine biosynthesis seems to be controlled primarily by regulation of HisG enzymatic activity. The polypeptide is ATP phosphoribosyltransferase (Haemophilus influenzae (strain 86-028NP)).